A 290-amino-acid chain; its full sequence is Malonyl-[acyl-carrier protein] O-methyltransferase (290 aa).

The protein belongs to the methyltransferase superfamily.

The catalysed reaction is malonyl-[ACP] + S-adenosyl-L-methionine = malonyl-[ACP] methyl ester + S-adenosyl-L-homocysteine. It functions in the pathway cofactor biosynthesis; biotin biosynthesis. Its function is as follows. Converts the free carboxyl group of a malonyl-thioester to its methyl ester by transfer of a methyl group from S-adenosyl-L-methionine (SAM). It allows to synthesize pimeloyl-ACP via the fatty acid synthetic pathway. The sequence is that of Malonyl-[acyl-carrier protein] O-methyltransferase from Gallionella capsiferriformans (strain ES-2) (Gallionella ferruginea capsiferriformans (strain ES-2)).